The sequence spans 130 residues: Small ribosomal subunit protein uS8B (130 aa).

This sequence belongs to the universal ribosomal protein uS8 family. In terms of assembly, component of the small ribosomal subunit (SSU). Mature yeast ribosomes consist of a small (40S) and a large (60S) subunit. The 40S small subunit contains 1 molecule of ribosomal RNA (18S rRNA) and 33 different proteins (encoded by 57 genes). The large 60S subunit contains 3 rRNA molecules (25S, 5.8S and 5S rRNA) and 46 different proteins (encoded by 81 genes).

The protein localises to the cytoplasm. Functionally, component of the ribosome, a large ribonucleoprotein complex responsible for the synthesis of proteins in the cell. The small ribosomal subunit (SSU) binds messenger RNAs (mRNAs) and translates the encoded message by selecting cognate aminoacyl-transfer RNA (tRNA) molecules. The large subunit (LSU) contains the ribosomal catalytic site termed the peptidyl transferase center (PTC), which catalyzes the formation of peptide bonds, thereby polymerizing the amino acids delivered by tRNAs into a polypeptide chain. The nascent polypeptides leave the ribosome through a tunnel in the LSU and interact with protein factors that function in enzymatic processing, targeting, and the membrane insertion of nascent chains at the exit of the ribosomal tunnel. The chain is Small ribosomal subunit protein uS8B from Saccharomyces cerevisiae (strain ATCC 204508 / S288c) (Baker's yeast).